A 43-amino-acid polypeptide reads, in one-letter code: Potassium channel toxin gamma-KTx 4.8 (43 aa).

4 cysteine pairs are disulfide-bonded: C5–C23, C11–C34, C20–C39, and C24–C41.

This sequence belongs to the ergtoxin family. Gamma-KTx 4 subfamily. Expressed by the venom gland.

It is found in the secreted. Its function is as follows. Reversibly blocks Kv11/ERG potassium channels. The sequence is that of Potassium channel toxin gamma-KTx 4.8 from Centruroides elegans (Bark scorpion).